A 288-amino-acid polypeptide reads, in one-letter code: Glucose-1-phosphate thymidylyltransferase (288 aa).

Mg(2+) contacts are provided by D108 and D223.

Belongs to the glucose-1-phosphate thymidylyltransferase family. Homotetramer. Mg(2+) serves as cofactor.

It carries out the reaction dTTP + alpha-D-glucose 1-phosphate + H(+) = dTDP-alpha-D-glucose + diphosphate. In terms of biological role, catalyzes the formation of dTDP-glucose, from dTTP and glucose 1-phosphate, as well as its pyrophosphorolysis. This chain is Glucose-1-phosphate thymidylyltransferase (rmlA), found in Neisseria gonorrhoeae.